Here is a 226-residue protein sequence, read N- to C-terminus: Ribonuclease 3 (226 aa).

Residues 6 to 128 (INRLQRKLGY…LIGGIFLDSD (123 aa)) form the RNase III domain. Residue Glu-41 participates in Mg(2+) binding. Asp-45 is an active-site residue. The Mg(2+) site is built by Asp-114 and Glu-117. The active site involves Glu-117. The region spanning 155–225 (DPKTRLQEFL…AEQALKQLEL (71 aa)) is the DRBM domain.

Belongs to the ribonuclease III family. In terms of assembly, homodimer. Mg(2+) serves as cofactor.

It is found in the cytoplasm. The enzyme catalyses Endonucleolytic cleavage to 5'-phosphomonoester.. In terms of biological role, digests double-stranded RNA. Involved in the processing of primary rRNA transcript to yield the immediate precursors to the large and small rRNAs (23S and 16S). Processes some mRNAs, and tRNAs when they are encoded in the rRNA operon. Processes pre-crRNA and tracrRNA of type II CRISPR loci if present in the organism. This is Ribonuclease 3 from Edwardsiella ictaluri (strain 93-146).